The sequence spans 357 residues: sn-glycerol-3-phosphate import ATP-binding protein UgpC (357 aa).

Residues 4-235 (LKLQAVTKSY…PASLFVASFI (232 aa)) enclose the ABC transporter domain. 37–44 (GPSGCGKS) contributes to the ATP binding site.

It belongs to the ABC transporter superfamily. sn-glycerol-3-phosphate importer (TC 3.A.1.1.3) family. In terms of assembly, the complex is composed of two ATP-binding proteins (UgpC), two transmembrane proteins (UgpA and UgpE) and a solute-binding protein (UgpB).

Its subcellular location is the cell inner membrane. It catalyses the reaction sn-glycerol 3-phosphate(out) + ATP + H2O = sn-glycerol 3-phosphate(in) + ADP + phosphate + H(+). Part of the ABC transporter complex UgpBAEC involved in sn-glycerol-3-phosphate (G3P) import. Responsible for energy coupling to the transport system. The protein is sn-glycerol-3-phosphate import ATP-binding protein UgpC of Pectobacterium atrosepticum (strain SCRI 1043 / ATCC BAA-672) (Erwinia carotovora subsp. atroseptica).